Here is a 236-residue protein sequence, read N- to C-terminus: Coat protein (236 aa).

Residues 1 to 27 are disordered; sequence MTTPANTTQAVGSTKSTTTTTAGATPA. The segment covering 7 to 27 has biased composition (low complexity); sequence TTQAVGSTKSTTTTTAGATPA.

Belongs to the potexvirus capsid protein family.

Its subcellular location is the virion. In terms of biological role, required for genome encapsidation. Forms ribonucleoprotein complexes along with TGB1 helicase and viral RNA. The polypeptide is Coat protein (Brassica campestris (Field mustard)).